A 541-amino-acid chain; its full sequence is 2-succinyl-5-enolpyruvyl-6-hydroxy-3-cyclohexene-1-carboxylate synthase (541 aa).

This sequence belongs to the TPP enzyme family. MenD subfamily. Homodimer. It depends on Mg(2+) as a cofactor. The cofactor is Mn(2+). Thiamine diphosphate is required as a cofactor.

The catalysed reaction is isochorismate + 2-oxoglutarate + H(+) = 5-enolpyruvoyl-6-hydroxy-2-succinyl-cyclohex-3-ene-1-carboxylate + CO2. Its pathway is quinol/quinone metabolism; 1,4-dihydroxy-2-naphthoate biosynthesis; 1,4-dihydroxy-2-naphthoate from chorismate: step 2/7. The protein operates within quinol/quinone metabolism; menaquinone biosynthesis. In terms of biological role, catalyzes the thiamine diphosphate-dependent decarboxylation of 2-oxoglutarate and the subsequent addition of the resulting succinic semialdehyde-thiamine pyrophosphate anion to isochorismate to yield 2-succinyl-5-enolpyruvyl-6-hydroxy-3-cyclohexene-1-carboxylate (SEPHCHC). This is 2-succinyl-5-enolpyruvyl-6-hydroxy-3-cyclohexene-1-carboxylate synthase from Leuconostoc citreum (strain KM20).